The primary structure comprises 350 residues: Methionine import ATP-binding protein MetN (350 aa).

Residues 2–241 form the ABC transporter domain; sequence IQIKNLKKEY…PQAPVTRSFV (240 aa). Residue 38–45 coordinates ATP; the sequence is GHSGAGKS.

It belongs to the ABC transporter superfamily. Methionine importer (TC 3.A.1.24) family. In terms of assembly, the complex is composed of two ATP-binding proteins (MetN), two transmembrane proteins (MetI) and a solute-binding protein (MetQ).

It localises to the cell inner membrane. The enzyme catalyses L-methionine(out) + ATP + H2O = L-methionine(in) + ADP + phosphate + H(+). It catalyses the reaction D-methionine(out) + ATP + H2O = D-methionine(in) + ADP + phosphate + H(+). Part of the ABC transporter complex MetNIQ involved in methionine import. Responsible for energy coupling to the transport system. In Francisella tularensis subsp. tularensis (strain SCHU S4 / Schu 4), this protein is Methionine import ATP-binding protein MetN.